Here is a 314-residue protein sequence, read N- to C-terminus: Probable cell division protein WhiA (314 aa).

Positions 277–311 (TLKELGEKMPSGAISKSGINHRLRKLNQLAEGYQQ) form a DNA-binding region, H-T-H motif.

The protein belongs to the WhiA family.

Involved in cell division and chromosome segregation. In Latilactobacillus sakei subsp. sakei (strain 23K) (Lactobacillus sakei subsp. sakei), this protein is Probable cell division protein WhiA.